The chain runs to 823 residues: Ciliated left-right organizer ZP-N domains-containing protein (823 aa).

An N-terminal signal peptide occupies residues 1 to 22 (MWGSPALAWAVWLACVQPTVFP). Disordered regions lie at residues 206 to 242 (MGLY…LLPL), 269 to 422 (LVHI…DLLH), 434 to 520 (GPFL…SPSP), and 632 to 656 (LPRE…EGPG). The segment covering 216–230 (TVTVQSPRQGLLQRW) has biased composition (pro residues). The span at 389 to 402 (GPETPPAGVPPAAS) shows a compositional bias: low complexity.

The protein localises to the secreted. In terms of biological role, plays a role in left-right patterning process. The protein is Ciliated left-right organizer ZP-N domains-containing protein of Homo sapiens (Human).